The primary structure comprises 336 residues: Malate dehydrogenase, cytoplasmic (336 aa).

NAD(+)-binding positions include 11-17 (GAAGQIG) and Asp42. Arg92 and Arg98 together coordinate substrate. Residues Asn105, Gln112, and 129 to 131 (VGN) each bind NAD(+). Asn131 and Arg163 together coordinate substrate. His188 (proton acceptor) is an active-site residue.

Belongs to the LDH/MDH superfamily. MDH type 2 family. Homodimer.

It localises to the cytoplasm. It catalyses the reaction (S)-malate + NAD(+) = oxaloacetate + NADH + H(+). Catalyzes the reversible conversion of (S)-malate to oxaloacetate in the cytoplasm where oxaloacetate is used for gluconeogenesis. The sequence is that of Malate dehydrogenase, cytoplasmic from Caenorhabditis elegans.